The primary structure comprises 714 residues: Fatty acid oxidation complex subunit alpha (714 aa).

The enoyl-CoA hydratase stretch occupies residues 1-190 (MEMASAFTLN…KLGLVDDVVP (190 aa)). The 3-hydroxyacyl-CoA dehydrogenase stretch occupies residues 306-714 (APLNSVGILG…FWKTTATDLQ (409 aa)).

This sequence in the N-terminal section; belongs to the enoyl-CoA hydratase/isomerase family. The protein in the central section; belongs to the 3-hydroxyacyl-CoA dehydrogenase family. As to quaternary structure, heterotetramer of two alpha chains (FadJ) and two beta chains (FadI).

It is found in the cytoplasm. It carries out the reaction a (3S)-3-hydroxyacyl-CoA = a (2E)-enoyl-CoA + H2O. The enzyme catalyses a 4-saturated-(3S)-3-hydroxyacyl-CoA = a (3E)-enoyl-CoA + H2O. It catalyses the reaction a (3S)-3-hydroxyacyl-CoA + NAD(+) = a 3-oxoacyl-CoA + NADH + H(+). The catalysed reaction is (3S)-3-hydroxybutanoyl-CoA = (3R)-3-hydroxybutanoyl-CoA. It functions in the pathway lipid metabolism; fatty acid beta-oxidation. Its function is as follows. Catalyzes the formation of a hydroxyacyl-CoA by addition of water on enoyl-CoA. Also exhibits 3-hydroxyacyl-CoA epimerase and 3-hydroxyacyl-CoA dehydrogenase activities. The chain is Fatty acid oxidation complex subunit alpha from Shigella boydii serotype 18 (strain CDC 3083-94 / BS512).